We begin with the raw amino-acid sequence, 617 residues long: Na(+)/H(+) antiporter NhaA 1 (617 aa).

A disordered region spans residues 1–26 (MTVTEPATQRGFPLLPSRLSRGSKAT). The tract at residues 1–433 (MTVTEPATQR…GWAIFRITDW (433 aa)) is na(+)/H(+) antiporter NhaA. Transmembrane regions (helical) follow at residues 33–53 (AAAL…SPWA), 75–95 (MTVK…IVGL), 113–133 (AVPV…FLAF), 141–161 (HAWG…LAII), 171–191 (LFLL…IAVL), 198–218 (VAPL…RYLP), 234–254 (IALY…ALLI), 304–324 (VSPV…AGVL), 341–361 (GIVA…TWLI), 378–398 (IAGG…IVDI), and 411–431 (IGVL…FRIT). The Thioredoxin domain maps to 434 to 617 (LSPPEPVGLK…LIRALEAGRG (184 aa)).

This sequence in the N-terminal section; belongs to the NhaA Na(+)/H(+) (TC 2.A.33) antiporter family.

The protein resides in the cell membrane. The catalysed reaction is Na(+)(in) + 2 H(+)(out) = Na(+)(out) + 2 H(+)(in). Na(+)/H(+) antiporter that extrudes sodium in exchange for external protons. In Mycolicibacterium gilvum (strain PYR-GCK) (Mycobacterium gilvum (strain PYR-GCK)), this protein is Na(+)/H(+) antiporter NhaA 1.